Reading from the N-terminus, the 471-residue chain is MIKVSLISLGCAKNLVDSEIMVGHLHQAGMAVIPEAEKADVVIVNTCSFIDSSKEESIGHILEVHQHRGLRKRRKEQKLIVAGCMSQRFSKDLSSSLHDEVDAFIGLDQVTKVAPIIQEIYARERTKTDDPVSFVEGRSTFIPDYDTPRFRLTPKHFAYVKIAEGCNHPCTFCIIPQIRGRHRSRTVESVVAEVRQLVREGVKEINLISQDTTFFGMDTWEQRPNPRTPVDSGRGTALTTLLRQLNAIEGDFWIRLLYTHPAHWSDELIRTIAECPKVARYIDIPLQHISDAMLSRMQRETSGGYIRDLIARIRAGIPGIAVRTTFIVGFPGETDADVDELCAFISETKFERLGVFRYSQEDGTRAAKMPEQLSAKTKEARWHRTMALQKQIAADVSKTYVGRTLRVLVEEPGVARGEADAPDIDGRVYVPRELPVGEFADVTVTGYHDYDLLALPPGQKPAQWKVARQAQ.

Residues 2-122 (IKVSLISLGC…VAPIIQEIYA (121 aa)) form the MTTase N-terminal domain. [4Fe-4S] cluster is bound by residues Cys11, Cys47, Cys84, Cys166, Cys170, and Cys173. The Radical SAM core domain occupies 152-395 (LTPKHFAYVK…MALQKQIAAD (244 aa)). The TRAM domain occupies 398-458 (KTYVGRTLRV…DYDLLALPPG (61 aa)).

This sequence belongs to the methylthiotransferase family. RimO subfamily. The cofactor is [4Fe-4S] cluster.

The protein localises to the cytoplasm. The enzyme catalyses L-aspartate(89)-[ribosomal protein uS12]-hydrogen + (sulfur carrier)-SH + AH2 + 2 S-adenosyl-L-methionine = 3-methylsulfanyl-L-aspartate(89)-[ribosomal protein uS12]-hydrogen + (sulfur carrier)-H + 5'-deoxyadenosine + L-methionine + A + S-adenosyl-L-homocysteine + 2 H(+). Catalyzes the methylthiolation of an aspartic acid residue of ribosomal protein uS12. In Opitutus terrae (strain DSM 11246 / JCM 15787 / PB90-1), this protein is Ribosomal protein uS12 methylthiotransferase RimO.